A 384-amino-acid chain; its full sequence is WD repeat-containing protein 74 (384 aa).

WD repeat units follow at residues Arg-40–Gln-80, Cys-83–Asp-122, Lys-128–Phe-168, Asp-179–Val-220, Thr-224–Lys-266, and Gly-267–His-306. Ser-214 carries the phosphoserine modification. N6-methyllysine is present on Lys-311. A required for nucleolar and nuclear location region spans residues Ser-320–Pro-384. The disordered stretch occupies residues Asp-323–Pro-384. A compositionally biased stretch (basic residues) spans Gln-371 to Pro-384.

Isoform 1 interacts (through WDR repeats) with NVL; the interaction is independent of RNA or pre-60S ribosome particles. Isoform 2 does not interact with NVL. Interacts with MTREX; the interaction dissociation in a late stage of rRNA synthesis is required for appropriate maturation of pre-60S particles and depends on the ATPase activity of NVL.

It localises to the nucleus. It is found in the nucleolus. In terms of biological role, regulatory protein of the MTREX-exosome complex involved in the synthesis of the 60S ribosomal subunit. Participates in an early cleavage of the pre-rRNA processing pathway in cooperation with NVL. Required for blastocyst formation, is necessary for RNA transcription, processing and/or stability during preimplantation development. This is WD repeat-containing protein 74 (Wdr74) from Mus musculus (Mouse).